Consider the following 203-residue polypeptide: Holliday junction branch migration complex subunit RuvA (203 aa).

The domain I stretch occupies residues 1–63 (MYEYLKGLVT…DTDITLFGFY (63 aa)). The interval 64–142 (DLDEKQLFQK…DLEQSATLVG (79 aa)) is domain II. The tract at residues 143-153 (QTAIDLGSQGD) is flexible linker. Residues 153 to 203 (DSPELSDALAALSALGYSAREVKAITPKLTDFAAQTTDQYLREGLRLLMKK) are domain III.

It belongs to the RuvA family. Homotetramer. Forms an RuvA(8)-RuvB(12)-Holliday junction (HJ) complex. HJ DNA is sandwiched between 2 RuvA tetramers; dsDNA enters through RuvA and exits via RuvB. An RuvB hexamer assembles on each DNA strand where it exits the tetramer. Each RuvB hexamer is contacted by two RuvA subunits (via domain III) on 2 adjacent RuvB subunits; this complex drives branch migration. In the full resolvosome a probable DNA-RuvA(4)-RuvB(12)-RuvC(2) complex forms which resolves the HJ.

It is found in the cytoplasm. In terms of biological role, the RuvA-RuvB-RuvC complex processes Holliday junction (HJ) DNA during genetic recombination and DNA repair, while the RuvA-RuvB complex plays an important role in the rescue of blocked DNA replication forks via replication fork reversal (RFR). RuvA specifically binds to HJ cruciform DNA, conferring on it an open structure. The RuvB hexamer acts as an ATP-dependent pump, pulling dsDNA into and through the RuvAB complex. HJ branch migration allows RuvC to scan DNA until it finds its consensus sequence, where it cleaves and resolves the cruciform DNA. The chain is Holliday junction branch migration complex subunit RuvA from Latilactobacillus sakei subsp. sakei (strain 23K) (Lactobacillus sakei subsp. sakei).